Consider the following 133-residue polypeptide: Large ribosomal subunit protein uL15 (133 aa).

The segment at 1–62 (MALHNLQPAP…GQQPLQRRLP (62 aa)) is disordered. Residues 32–45 (TRGQKGQKSRTGYS) are compositionally biased toward polar residues.

It belongs to the universal ribosomal protein uL15 family. Part of the 50S ribosomal subunit.

Functionally, binds to the 23S rRNA. The protein is Large ribosomal subunit protein uL15 of Nitratiruptor sp. (strain SB155-2).